A 122-amino-acid chain; its full sequence is Large ribosomal subunit protein uL14 (122 aa).

The protein belongs to the universal ribosomal protein uL14 family. As to quaternary structure, part of the 50S ribosomal subunit. Forms a cluster with proteins L3 and L19. In the 70S ribosome, L14 and L19 interact and together make contacts with the 16S rRNA in bridges B5 and B8.

In terms of biological role, binds to 23S rRNA. Forms part of two intersubunit bridges in the 70S ribosome. This chain is Large ribosomal subunit protein uL14, found in Marinomonas sp. (strain MWYL1).